We begin with the raw amino-acid sequence, 253 residues long: Probable glutathione transferase omega-2 (253 aa).

In terms of domain architecture, GST N-terminal spans 25-105 (GIYRIYNMRF…YLDDLFPESR (81 aa)). Cys35 acts as the Nucleophile in catalysis. Residues Lys62, Val75, and 89–90 (ES) each bind glutathione. The GST C-terminal domain maps to 110–238 (DPYEKVQQKL…SQPTEMGVGF (129 aa)).

This sequence belongs to the GST superfamily. Omega family.

It catalyses the reaction RX + glutathione = an S-substituted glutathione + a halide anion + H(+). The enzyme catalyses L-dehydroascorbate + 2 glutathione = glutathione disulfide + L-ascorbate. It carries out the reaction methylarsonate + 2 glutathione + H(+) = methylarsonous acid + glutathione disulfide + H2O. In terms of biological role, exhibits glutathione-dependent thiol transferase activity. Has dehydroascorbate reductase activity and may contribute to the recycling of ascorbic acid. Participates in the biotransformation of inorganic arsenic and reduces monomethylarsonic acid (MMA). This is Probable glutathione transferase omega-2 from Caenorhabditis briggsae.